A 330-amino-acid chain; its full sequence is Ketol-acid reductoisomerase (NADP(+)) (330 aa).

A KARI N-terminal Rossmann domain is found at 3–184 (LPVYYDKDID…GGGRMGVLET (182 aa)). NADP(+) contacts are provided by residues 26-29 (YGVQ), serine 52, and serine 54. Histidine 109 is a catalytic residue. Glycine 135 is an NADP(+) binding site. Positions 185-329 (SFKEECESDL…EILRAPFNHK (145 aa)) constitute a KARI C-terminal knotted domain. Mg(2+) contacts are provided by aspartate 193, glutamate 197, glutamate 229, and glutamate 233. Serine 254 contributes to the substrate binding site.

It belongs to the ketol-acid reductoisomerase family. It depends on Mg(2+) as a cofactor.

The enzyme catalyses (2R)-2,3-dihydroxy-3-methylbutanoate + NADP(+) = (2S)-2-acetolactate + NADPH + H(+). It catalyses the reaction (2R,3R)-2,3-dihydroxy-3-methylpentanoate + NADP(+) = (S)-2-ethyl-2-hydroxy-3-oxobutanoate + NADPH + H(+). The protein operates within amino-acid biosynthesis; L-isoleucine biosynthesis; L-isoleucine from 2-oxobutanoate: step 2/4. Its pathway is amino-acid biosynthesis; L-valine biosynthesis; L-valine from pyruvate: step 2/4. Its function is as follows. Involved in the biosynthesis of branched-chain amino acids (BCAA). Catalyzes an alkyl-migration followed by a ketol-acid reduction of (S)-2-acetolactate (S2AL) to yield (R)-2,3-dihydroxy-isovalerate. In the isomerase reaction, S2AL is rearranged via a Mg-dependent methyl migration to produce 3-hydroxy-3-methyl-2-ketobutyrate (HMKB). In the reductase reaction, this 2-ketoacid undergoes a metal-dependent reduction by NADPH to yield (R)-2,3-dihydroxy-isovalerate. The chain is Ketol-acid reductoisomerase (NADP(+)) from Helicobacter pylori (strain J99 / ATCC 700824) (Campylobacter pylori J99).